A 577-amino-acid polypeptide reads, in one-letter code: Laccase-17 (577 aa).

The signal sequence occupies residues 1–22 (MALQLLLAVFSCVLLLPQPAFG). 2 Plastocyanin-like domains span residues 30-146 (EIKM…PKRG) and 156-309 (KEVP…YEPP). N-linked (GlcNAc...) asparagine glycans are attached at residues Asn-35 and Asn-76. Residues His-80 and His-82 each coordinate Cu cation. Asn-112 is a glycosylation site (N-linked (GlcNAc...) asparagine). Residues His-125 and His-127 each contribute to the Cu cation site. Asn-185, Asn-201, Asn-237, Asn-297, Asn-335, Asn-383, Asn-391, Asn-401, Asn-437, Asn-444, Asn-450, and Asn-460 each carry an N-linked (GlcNAc...) asparagine glycan. Positions 427–561 (KFPWSPIVPF…RMAWLVLDGD (135 aa)) constitute a Plastocyanin-like 3 domain. Residues His-478, His-481, His-483, His-540, Cys-541, His-542, and His-546 each contribute to the Cu cation site.

It belongs to the multicopper oxidase family. The cofactor is Cu cation. Ubiquitous with higher levels in the inflorescence stem.

Its subcellular location is the secreted. It localises to the extracellular space. The protein resides in the apoplast. The catalysed reaction is 4 hydroquinone + O2 = 4 benzosemiquinone + 2 H2O. Functionally, lignin degradation and detoxification of lignin-derived products. This Arabidopsis thaliana (Mouse-ear cress) protein is Laccase-17 (LAC17).